The chain runs to 364 residues: MQDRQKAQDYRALLLADTPLIDVRAPIEFEQGAMPGAINLPLMIDDERAAVGTCYKRQGADAALALGHRLVCGDIRQQRLEAWKAAYQRFPNGYLCCARGGQRSHIVQRWLQETGIDCPLIEGGYKALRQTAIQATWQLAQKPILLIGGCTGSGKTQLVRQQPNGVDLEGLARHRGSSFGRTLNPQLSQASFENKLAVELLKINARQTLKRWVLEDEGRTIGANHLPECLRERMAQAPIAVVEDPFALRLERLREEYFIRMHHDFTHAYGDEAGWQAYSEYLHHGLFAIRRRLGLQRFAELTDTLDRALAEQLSSGSTDGHMAWLVPLLNEYYDPMYRYQLEKKAANIVFRGTWQEVANWLKAQ.

The region spanning 14 to 137 is the Rhodanese domain; sequence LLADTPLIDV…LRQTAIQATW (124 aa). Residue Cys97 is the S-selanylcysteine intermediate of the active site.

The protein belongs to the SelU family. Monomer.

It carries out the reaction 5-methylaminomethyl-2-thiouridine(34) in tRNA + selenophosphate + (2E)-geranyl diphosphate + H2O + H(+) = 5-methylaminomethyl-2-selenouridine(34) in tRNA + (2E)-thiogeraniol + phosphate + diphosphate. The catalysed reaction is 5-methylaminomethyl-2-thiouridine(34) in tRNA + (2E)-geranyl diphosphate = 5-methylaminomethyl-S-(2E)-geranyl-thiouridine(34) in tRNA + diphosphate. It catalyses the reaction 5-methylaminomethyl-S-(2E)-geranyl-thiouridine(34) in tRNA + selenophosphate + H(+) = 5-methylaminomethyl-2-(Se-phospho)selenouridine(34) in tRNA + (2E)-thiogeraniol. The enzyme catalyses 5-methylaminomethyl-2-(Se-phospho)selenouridine(34) in tRNA + H2O = 5-methylaminomethyl-2-selenouridine(34) in tRNA + phosphate. Functionally, involved in the post-transcriptional modification of the uridine at the wobble position (U34) of tRNA(Lys), tRNA(Glu) and tRNA(Gln). Catalyzes the conversion of 2-thiouridine (S2U-RNA) to 2-selenouridine (Se2U-RNA). Acts in a two-step process involving geranylation of 2-thiouridine (S2U) to S-geranyl-2-thiouridine (geS2U) and subsequent selenation of the latter derivative to 2-selenouridine (Se2U) in the tRNA chain. The chain is tRNA 2-selenouridine synthase from Salmonella gallinarum (strain 287/91 / NCTC 13346).